A 251-amino-acid polypeptide reads, in one-letter code: MRKPIIAGNWKMNKTLAEAVSFVEEVKGQIPAASAVDAVVCSPALFLERLVAKAEGTDLQVGAQNMHFEKNGAFTGEISPVALSDLKVGYVVLGHSERREMFAETDESVNKKTLAAFEHGLTPIVCCGETLEERESGKTFDLVAGQVTKALAGLTEEQVKVTVIAYEPIWAIGTGKSSSSADANEVCAHIRKVVAEAVSPEAAEAVRIQYGGSVKPENIKEYMAQSDIDGALVGGASLEPASFLGLLGAVK.

Residue 9–11 coordinates substrate; the sequence is NWK. Catalysis depends on His95, which acts as the Electrophile. Glu167 serves as the catalytic Proton acceptor. Substrate contacts are provided by residues Gly173, Ser213, and 234-235; that span reads GG. Phosphoserine is present on Ser213.

The protein belongs to the triosephosphate isomerase family. Homodimer.

It is found in the cytoplasm. It carries out the reaction D-glyceraldehyde 3-phosphate = dihydroxyacetone phosphate. It participates in carbohydrate biosynthesis; gluconeogenesis. It functions in the pathway carbohydrate degradation; glycolysis; D-glyceraldehyde 3-phosphate from glycerone phosphate: step 1/1. Its function is as follows. Involved in the gluconeogenesis. Catalyzes stereospecifically the conversion of dihydroxyacetone phosphate (DHAP) to D-glyceraldehyde-3-phosphate (G3P). This is Triosephosphate isomerase from Bacillus mycoides (strain KBAB4) (Bacillus weihenstephanensis).